The following is a 187-amino-acid chain: Cerebral dopamine neurotrophic factor (187 aa).

The signal sequence occupies residues 1–24 (MRCISPTALVTFCAGFCISNPVLA). Cystine bridges form between cysteine 37/cysteine 124, cysteine 40/cysteine 113, and cysteine 71/cysteine 82.

The protein belongs to the ARMET family. As to expression, expressed at high levels in the heart, skeletal muscle, testis and brain (at protein level). In the brain, detected in the cerebral cortex neurons through layers II to VI. In the hippocampus, detected in the CA1 to CA3 pyramidal regions and in the granule and polymorph layers of dentate gyrus. Weak expression in the striatum. In substantia nigra, detected in solitary cells that did not express tyrosine hydroxylase, a marker for dopaminergic neurons. Relatively high expression in the Purkinje cells of the cerebellum and in regions of the brain stem, including the locus coeruleus.

Its subcellular location is the secreted. Trophic factor for dopamine neurons. Prevents the 6-hydroxydopamine (6-OHDA)-induced degeneration of dopaminergic neurons. When administered after 6-OHDA-lesioning, restores the dopaminergic function and prevents the degeneration of dopaminergic neurons in substantia nigra. This is Cerebral dopamine neurotrophic factor (Cdnf) from Mus musculus (Mouse).